We begin with the raw amino-acid sequence, 440 residues long: UDP-N-acetylglucosamine 1-carboxyvinyltransferase (440 aa).

22-23 is a phosphoenolpyruvate binding site; the sequence is KN. Position 102 (Arg-102) interacts with UDP-N-acetyl-alpha-D-glucosamine. Residue Cys-126 is the Proton donor of the active site. Cys-126 bears the 2-(S-cysteinyl)pyruvic acid O-phosphothioketal mark. Residues 131–135, Asp-320, and Ile-342 contribute to the UDP-N-acetyl-alpha-D-glucosamine site; that span reads RPVDQ.

It belongs to the EPSP synthase family. MurA subfamily.

Its subcellular location is the cytoplasm. It carries out the reaction phosphoenolpyruvate + UDP-N-acetyl-alpha-D-glucosamine = UDP-N-acetyl-3-O-(1-carboxyvinyl)-alpha-D-glucosamine + phosphate. The protein operates within cell wall biogenesis; peptidoglycan biosynthesis. Its function is as follows. Cell wall formation. Adds enolpyruvyl to UDP-N-acetylglucosamine. In Acidovorax ebreus (strain TPSY) (Diaphorobacter sp. (strain TPSY)), this protein is UDP-N-acetylglucosamine 1-carboxyvinyltransferase.